The primary structure comprises 552 residues: Non-structural protein NS1 (552 aa).

The protein belongs to the orbivirus non-structural protein NS1 family.

The polypeptide is Non-structural protein NS1 (Segment-5) (Epizootic hemorrhagic disease virus 2 (strain Alberta) (EHDV-2)).